We begin with the raw amino-acid sequence, 77 residues long: UPF0291 protein RBAM_017680 (77 aa).

A disordered region spans residues 55-77 (IDPEGNDVTPEKLKREQQKNNLH). Basic and acidic residues predominate over residues 63 to 77 (TPEKLKREQQKNNLH).

The protein belongs to the UPF0291 family.

Its subcellular location is the cytoplasm. The sequence is that of UPF0291 protein RBAM_017680 from Bacillus velezensis (strain DSM 23117 / BGSC 10A6 / LMG 26770 / FZB42) (Bacillus amyloliquefaciens subsp. plantarum).